The following is a 309-amino-acid chain: Type II methyltransferase M.HgiDI (309 aa).

The 297-residue stretch at Met-1 to Pro-297 folds into the SAM-dependent MTase C5-type domain. Cys-75 is a catalytic residue.

This sequence belongs to the class I-like SAM-binding methyltransferase superfamily. C5-methyltransferase family.

The enzyme catalyses a 2'-deoxycytidine in DNA + S-adenosyl-L-methionine = a 5-methyl-2'-deoxycytidine in DNA + S-adenosyl-L-homocysteine + H(+). In terms of biological role, a methylase that recognizes the double-stranded sequence 5'-GRCGYC-3', methylates C-? on both strands, and protects the DNA from cleavage by the HgiDI endonuclease. In Herpetosiphon aurantiacus (Herpetosiphon giganteus), this protein is Type II methyltransferase M.HgiDI.